We begin with the raw amino-acid sequence, 262 residues long: Ribosomal RNA small subunit methyltransferase A (262 aa).

The S-adenosyl-L-methionine site is built by Asn-13, Leu-15, Gly-40, Glu-61, Asp-85, and Asn-104.

Belongs to the class I-like SAM-binding methyltransferase superfamily. rRNA adenine N(6)-methyltransferase family. RsmA subfamily.

The protein resides in the cytoplasm. It catalyses the reaction adenosine(1518)/adenosine(1519) in 16S rRNA + 4 S-adenosyl-L-methionine = N(6)-dimethyladenosine(1518)/N(6)-dimethyladenosine(1519) in 16S rRNA + 4 S-adenosyl-L-homocysteine + 4 H(+). Specifically dimethylates two adjacent adenosines (A1518 and A1519) in the loop of a conserved hairpin near the 3'-end of 16S rRNA in the 30S particle. May play a critical role in biogenesis of 30S subunits. This chain is Ribosomal RNA small subunit methyltransferase A, found in Chromobacterium violaceum (strain ATCC 12472 / DSM 30191 / JCM 1249 / CCUG 213 / NBRC 12614 / NCIMB 9131 / NCTC 9757 / MK).